The chain runs to 182 residues: Putative manganese efflux pump MntP (182 aa).

5 consecutive transmembrane segments (helical) span residues 3–23 (ILLL…SNGA), 42–62 (FFQG…VGFI), 65–85 (IDHF…IFDS), 126–146 (IWFS…AATF), and 161–181 (ILGG…HLGI).

This sequence belongs to the MntP (TC 9.B.29) family.

Its subcellular location is the cell inner membrane. Its function is as follows. Probably functions as a manganese efflux pump. In Campylobacter hominis (strain ATCC BAA-381 / DSM 21671 / CCUG 45161 / LMG 19568 / NCTC 13146 / CH001A), this protein is Putative manganese efflux pump MntP.